The following is a 73-amino-acid chain: Large ribosomal subunit protein bL27c (73 aa).

It belongs to the bacterial ribosomal protein bL27 family.

It localises to the plastid. The protein localises to the chloroplast. The chain is Large ribosomal subunit protein bL27c (rpl27) from Chrysochromulina alifera (Plankton alga).